The following is a 39-amino-acid chain: AHDGNPLEECFREDDEEFFLEIAKNGLTATSNPKRVVIV.

Belongs to the flavin monoamine oxidase family. FIG1 subfamily. As to quaternary structure, monomer. This is in contrast with most of its orthologs, that are non-covalently linked homodimers. FAD is required as a cofactor. N-glycosylated. In terms of tissue distribution, expressed by the venom gland.

It localises to the secreted. The catalysed reaction is an L-alpha-amino acid + O2 + H2O = a 2-oxocarboxylate + H2O2 + NH4(+). The enzyme catalyses L-leucine + O2 + H2O = 4-methyl-2-oxopentanoate + H2O2 + NH4(+). Catalyzes an oxidative deamination of predominantly hydrophobic and aromatic L-amino acids, thus producing hydrogen peroxide that may contribute to the diverse toxic effects of this enzyme. Shows activity on L-Leu. Exhibits diverse biological activities, such as hemorrhage, hemolysis, edema, apoptosis of vascular endothelial cells or tumor cell lines, and antiparasitic activities, as well as regulation of platelet aggregation. Effects of snake L-amino oxidases on platelets are controversial, since they either induce aggregation or inhibit agonist-induced aggregation. These different effects are probably due to different experimental conditions. In addition, this protein inhibits dose-dependently the growth of Gram-positive, Gram-negative bacteria and yeast, probably by the generation of hydrogen peroxide. This Bothrops marajoensis (Marajo lancehead) protein is L-amino-acid oxidase.